Here is a 458-residue protein sequence, read N- to C-terminus: Protein unc-93 homolog A (458 aa).

A run of 5 helical transmembrane segments spans residues 8–28, 42–62, 69–89, 90–110, and 140–160; these read VLVV…LQNL, TLST…PILI, WTIV…FHAN, WYTL…LWSA, and IFFL…SLVF. N190 is a glycosylation site (N-linked (GlcNAc...) asparagine). The next 7 helical transmembrane spans lie at 202–222, 258–275, 286–306, 321–341, 345–365, 390–410, and 412–432; these read TLLG…AVFL, LCLL…QEFL, CALG…MTAL, AALY…FLLW, TNQL…DAVW, LGEA…CVST, and LYIL…VEYL.

It belongs to the unc-93 family.

The protein localises to the cell membrane. The chain is Protein unc-93 homolog A (Unc93a) from Mus musculus (Mouse).